Consider the following 162-residue polypeptide: NADH-quinone oxidoreductase subunit I (162 aa).

2 4Fe-4S ferredoxin-type domains span residues 53–83 and 93–122; these read LRRY…IDSA and TRYD…ETHI. [4Fe-4S] cluster contacts are provided by Cys-63, Cys-66, Cys-69, Cys-73, Cys-102, Cys-105, Cys-108, and Cys-112.

This sequence belongs to the complex I 23 kDa subunit family. In terms of assembly, NDH-1 is composed of 14 different subunits. Subunits NuoA, H, J, K, L, M, N constitute the membrane sector of the complex. Requires [4Fe-4S] cluster as cofactor.

Its subcellular location is the cell inner membrane. The enzyme catalyses a quinone + NADH + 5 H(+)(in) = a quinol + NAD(+) + 4 H(+)(out). In terms of biological role, NDH-1 shuttles electrons from NADH, via FMN and iron-sulfur (Fe-S) centers, to quinones in the respiratory chain. The immediate electron acceptor for the enzyme in this species is believed to be ubiquinone. Couples the redox reaction to proton translocation (for every two electrons transferred, four hydrogen ions are translocated across the cytoplasmic membrane), and thus conserves the redox energy in a proton gradient. In Xanthomonas oryzae pv. oryzae (strain MAFF 311018), this protein is NADH-quinone oxidoreductase subunit I.